A 324-amino-acid polypeptide reads, in one-letter code: N-acetyl-gamma-glutamyl-phosphate reductase (324 aa).

C131 is an active-site residue.

It belongs to the NAGSA dehydrogenase family. Type 1 subfamily.

It localises to the cytoplasm. It catalyses the reaction N-acetyl-L-glutamate 5-semialdehyde + phosphate + NADP(+) = N-acetyl-L-glutamyl 5-phosphate + NADPH + H(+). Its pathway is amino-acid biosynthesis; L-arginine biosynthesis; N(2)-acetyl-L-ornithine from L-glutamate: step 3/4. In terms of biological role, catalyzes the NADPH-dependent reduction of N-acetyl-5-glutamyl phosphate to yield N-acetyl-L-glutamate 5-semialdehyde. In Bradyrhizobium sp. (strain ORS 278), this protein is N-acetyl-gamma-glutamyl-phosphate reductase.